A 307-amino-acid polypeptide reads, in one-letter code: Fructose-bisphosphate aldolase (307 aa).

Serine 49 contacts D-glyceraldehyde 3-phosphate. Aspartate 82 acts as the Proton donor in catalysis. The Zn(2+) site is built by histidine 83, aspartate 104, glutamate 134, and histidine 180. Glycine 181 contributes to the dihydroxyacetone phosphate binding site. Histidine 210 contacts Zn(2+). Residues 211–213 and 253–256 each bind dihydroxyacetone phosphate; these read GAS and NTDT.

The protein belongs to the class II fructose-bisphosphate aldolase family. In terms of assembly, homodimer. The cofactor is Zn(2+).

It catalyses the reaction beta-D-fructose 1,6-bisphosphate = D-glyceraldehyde 3-phosphate + dihydroxyacetone phosphate. It functions in the pathway carbohydrate degradation; glycolysis; D-glyceraldehyde 3-phosphate and glycerone phosphate from D-glucose: step 4/4. Its function is as follows. Catalyzes the aldol condensation of dihydroxyacetone phosphate (DHAP or glycerone-phosphate) with glyceraldehyde 3-phosphate (G3P) to form fructose 1,6-bisphosphate (FBP) in gluconeogenesis and the reverse reaction in glycolysis. The protein is Fructose-bisphosphate aldolase (fba) of Helicobacter pylori (strain ATCC 700392 / 26695) (Campylobacter pylori).